Reading from the N-terminus, the 271-residue chain is Aminoglycoside N(3)-acetyltransferase III (271 aa).

The CoA site is built by His-31, Ala-32, Ser-33, Val-34, and Lys-35. A 2-deoxystreptamine antibiotic-binding residues include Tyr-64, Asp-72, and Glu-102. Residues Ser-104, Val-105, and Phe-109 each coordinate CoA. A 2-deoxystreptamine antibiotic is bound by residues Glu-123, Tyr-146, and Asp-170. CoA-binding residues include Thr-171 and Thr-173. Residues His-176, Thr-212, Gly-213, and Phe-221 each contribute to the a 2-deoxystreptamine antibiotic site.

Belongs to the antibiotic N-acetyltransferase family. In terms of assembly, homodimer.

It carries out the reaction a 2-deoxystreptamine antibiotic + acetyl-CoA = an N(3)-acetyl-2-deoxystreptamine antibiotic + CoA + H(+). Functionally, resistance to antibiotics containing the 2-deoxy-streptamine ring including dibekacin, gentamicin, kanamycin, sisomicin, tobramycin and neomycin, but not to amikacin or netilmicin. Acetylates a broad range of both 4,5- and 4,6-disubstituted aminoglycosides, including neomycin, paromomycin, ribostamycin, sisomicin, gentamicin, tobramycin and kanamycin, with no preference of one disubstitution over the other. Acetylates sisomicin and kanamycin most and least efficiently, respectively. Does not modify plazomicin. This Pseudomonas aeruginosa protein is Aminoglycoside N(3)-acetyltransferase III.